A 453-amino-acid chain; its full sequence is Probable tRNA methyltransferase 9B (453 aa).

Phosphoserine is present on S214.

This sequence belongs to the methyltransferase superfamily.

In terms of biological role, may modify wobble uridines in specific arginine and glutamic acid tRNAs. Acts as a tumor suppressor by promoting the expression of LIN9. The sequence is that of Probable tRNA methyltransferase 9B (TRMT9B) from Bos taurus (Bovine).